The primary structure comprises 156 residues: MTVQNDNRPLLRLVRLANGADLELPSYETRGAAGMDLRAAVPADEPLNLQPGERALVPTGFIFEVPQGYEAQIRPRSGLAIKNGITCLNSPGTVDSDYRGEVKVILANLGQDDFTIERGMRIAQMVIAPVTQVTVSEVTETSETARGAGGFGSTGV.

Substrate is bound by residues 76–78 (RSG), Asn-89, 93–95 (TVD), and Lys-103.

It belongs to the dUTPase family. It depends on Mg(2+) as a cofactor.

The catalysed reaction is dUTP + H2O = dUMP + diphosphate + H(+). Its pathway is pyrimidine metabolism; dUMP biosynthesis; dUMP from dCTP (dUTP route): step 2/2. In terms of biological role, this enzyme is involved in nucleotide metabolism: it produces dUMP, the immediate precursor of thymidine nucleotides and it decreases the intracellular concentration of dUTP so that uracil cannot be incorporated into DNA. This Agrobacterium fabrum (strain C58 / ATCC 33970) (Agrobacterium tumefaciens (strain C58)) protein is Deoxyuridine 5'-triphosphate nucleotidohydrolase.